The primary structure comprises 139 residues: MADLVTVVKKTEEEWRAVLSPEQFRILRQKGTETPGTEEYDKFFEEGIFSCIGCKTPLYKSTTKFDAGCGWPAFFEGLPGAINRAPDPDGRRTEITCAVCDGHLGHVHKGEGYSTPTDERLCVNSVSINFNPAKPSSIT.

Ala2 carries the post-translational modification N-acetylalanine. The 122-residue stretch at 12–133 folds into the MsrB domain; sequence EEEWRAVLSP…NSVSINFNPA (122 aa). Zn(2+) is bound by residues Cys51, Cys54, Cys97, and Cys100. Cysteines 69 and 122 form a disulfide. Residue Cys122 is the Nucleophile of the active site.

It belongs to the MsrB Met sulfoxide reductase family. The cofactor is Zn(2+).

Its subcellular location is the cytoplasm. The protein localises to the cytosol. It carries out the reaction L-methionyl-[protein] + [thioredoxin]-disulfide + H2O = L-methionyl-(R)-S-oxide-[protein] + [thioredoxin]-dithiol. Its function is as follows. Catalyzes the reduction of methionine sulfoxide (MetSO) to methionine in proteins. Plays a protective role against oxidative stress by restoring activity to proteins that have been inactivated by methionine oxidation. MSRB family specifically reduces the MetSO R-enantiomer. The polypeptide is Peptide methionine sulfoxide reductase B4 (MSRB4) (Arabidopsis thaliana (Mouse-ear cress)).